The following is a 449-amino-acid chain: Chromosomal replication initiator protein DnaA (449 aa).

Residues Met-1–Gln-73 are domain I, interacts with DnaA modulators. Positions Gln-73 to Pro-109 are domain II. Positions Thr-90–Arg-103 are enriched in polar residues. A disordered region spans residues Thr-90–Glu-110. A domain III, AAA+ region region spans residues Glu-110–Ile-326. Positions 154, 156, 157, and 158 each coordinate ATP. The segment at Ala-327–Leu-449 is domain IV, binds dsDNA.

It belongs to the DnaA family. As to quaternary structure, oligomerizes as a right-handed, spiral filament on DNA at oriC.

The protein localises to the cytoplasm. Plays an essential role in the initiation and regulation of chromosomal replication. ATP-DnaA binds to the origin of replication (oriC) to initiate formation of the DNA replication initiation complex once per cell cycle. Binds the DnaA box (a 9 base pair repeat at the origin) and separates the double-stranded (ds)DNA. Forms a right-handed helical filament on oriC DNA; dsDNA binds to the exterior of the filament while single-stranded (ss)DNA is stabiized in the filament's interior. The ATP-DnaA-oriC complex binds and stabilizes one strand of the AT-rich DNA unwinding element (DUE), permitting loading of DNA polymerase. After initiation quickly degrades to an ADP-DnaA complex that is not apt for DNA replication. Binds acidic phospholipids. The polypeptide is Chromosomal replication initiator protein DnaA (Picosynechococcus sp. (strain ATCC 27264 / PCC 7002 / PR-6) (Agmenellum quadruplicatum)).